Reading from the N-terminus, the 388-residue chain is Beta-hexosaminidase LpqI (388 aa).

The signal sequence occupies residues 1 to 19 (MAFPRTLAILAAAAALVVA). The N-palmitoyl cysteine moiety is linked to residue C20. C20 carries the S-diacylglycerol cysteine lipid modification. Substrate is bound by residues D123, R131, R193, and 223-224 (KH). Residue H236 is the Proton donor/acceptor of the active site. D311 (nucleophile) is an active-site residue.

Belongs to the glycosyl hydrolase 3 family.

The protein localises to the cell inner membrane. The catalysed reaction is Hydrolysis of terminal non-reducing N-acetyl-D-hexosamine residues in N-acetyl-beta-D-hexosaminides.. It participates in cell wall biogenesis; peptidoglycan recycling. Its function is as follows. Plays a role in peptidoglycan recycling by cleaving the terminal beta-1,4-linked N-acetylglucosamine (GlcNAc) from peptidoglycan fragments. Acts as a regulator for GlcNAc-MurNAc levels by cleaving disaccharides and allowing the breakdown of MurNAc. The chain is Beta-hexosaminidase LpqI from Mycobacterium bovis (strain BCG / Pasteur 1173P2).